A 234-amino-acid chain; its full sequence is Small ribosomal subunit protein uS2 (234 aa).

This sequence belongs to the universal ribosomal protein uS2 family.

The polypeptide is Small ribosomal subunit protein uS2 (Prochlorococcus marinus subsp. pastoris (strain CCMP1986 / NIES-2087 / MED4)).